We begin with the raw amino-acid sequence, 97 residues long: Insertion element IS2 uncharacterized 11.1 kDa protein (97 aa).

This chain is Insertion element IS2 uncharacterized 11.1 kDa protein, found in Escherichia coli.